Consider the following 368-residue polypeptide: Putative F-box/kelch-repeat protein At5g02995 (368 aa).

In terms of domain architecture, F-box spans Ser-35–Ile-84. Kelch repeat units lie at residues Asp-140–Lys-186 and Lys-187–Gly-233.

This is Putative F-box/kelch-repeat protein At5g02995 from Arabidopsis thaliana (Mouse-ear cress).